The following is a 113-amino-acid chain: MNTVRVTFLLVFVLAVSLGQADKDENRMEMQEKTEQGKSYLDFAENLLLQKLEELEAKLLEEDSEESRNSRQKRCIGEGVPCDENDPRCCSGLVRLKPTLHGIWYKSYYCYKK.

The signal sequence occupies residues 1-21; it reads MNTVRVTFLLVFVLAVSLGQA. Residues 22 to 74 constitute a propeptide that is removed on maturation; it reads DKDENRMEMQEKTEQGKSYLDFAENLLLQKLEELEAKLLEEDSEESRNSRQKR. The segment covering 60–69 has biased composition (basic and acidic residues); the sequence is LEEDSEESRN. Residues 60–83 are disordered; sequence LEEDSEESRNSRQKRCIGEGVPCD. 2 disulfide bridges follow: cysteine 75–cysteine 90 and cysteine 89–cysteine 110.

This sequence belongs to the neurotoxin 14 (magi-1) family. 01 (HNTX-16) subfamily. As to expression, expressed by the venom gland.

The protein localises to the secreted. Functionally, probable ion channel inhibitor. In Cyriopagopus hainanus (Chinese bird spider), this protein is U11-theraphotoxin-Hhn1n.